Consider the following 488-residue polypeptide: Ergochrome gene cluster transcriptional regulator CPUR_05433 (488 aa).

Residues 1–29 (MDHSIGGRNCQSGGTTASAPRSTGSDEFP) are disordered. The span at 9-25 (NCQSGGTTASAPRSTGS) shows a compositional bias: polar residues. The segment at residues 36–63 (CHACSLSKVRCSKEKPSCSRCAKRGVPC) is a DNA-binding region (zn(2)-C6 fungal-type).

It localises to the nucleus. Its function is as follows. Transcription factor; part of the gene cluster responsible for the typical purple-black color of the ergot sclerotia. The ergochrome gene cluster produces several ergot pigments including the yellow ergochrome secalonic acid and its derivatives, as well as the red anthraquinones endocrocin and clavorubin. In Claviceps purpurea (strain 20.1) (Ergot fungus), this protein is Ergochrome gene cluster transcriptional regulator CPUR_05433.